Reading from the N-terminus, the 304-residue chain is GTPase Era (304 aa).

In terms of domain architecture, Era-type G spans 11 to 179; sequence YCGFIAIVGR…QKIVRKSLRE (169 aa). The G1 stretch occupies residues 19-26; the sequence is GRPNVGKS. Residue 19-26 participates in GTP binding; the sequence is GRPNVGKS. The interval 45–49 is G2; it reads QTTRH. The G3 stretch occupies residues 66-69; sequence DTPG. Residues 66–70 and 128–131 contribute to the GTP site; these read DTPGL and NKVD. The tract at residues 128–131 is G4; sequence NKVD. Residues 158–160 are G5; sequence ISA. Residues 210–287 form the KH type-2 domain; it reads TGEELPYSVT…HLELWVKVKA (78 aa).

Belongs to the TRAFAC class TrmE-Era-EngA-EngB-Septin-like GTPase superfamily. Era GTPase family. As to quaternary structure, monomer.

The protein localises to the cytoplasm. Its subcellular location is the cell inner membrane. Functionally, an essential GTPase that binds both GDP and GTP, with rapid nucleotide exchange. Plays a role in 16S rRNA processing and 30S ribosomal subunit biogenesis and possibly also in cell cycle regulation and energy metabolism. The polypeptide is GTPase Era (Actinobacillus pleuropneumoniae serotype 3 (strain JL03)).